The chain runs to 158 residues: NAD(P)H-quinone oxidoreductase subunit J, chloroplastic (158 aa).

It belongs to the complex I 30 kDa subunit family. As to quaternary structure, NDH is composed of at least 16 different subunits, 5 of which are encoded in the nucleus.

Its subcellular location is the plastid. The protein resides in the chloroplast thylakoid membrane. The catalysed reaction is a plastoquinone + NADH + (n+1) H(+)(in) = a plastoquinol + NAD(+) + n H(+)(out). It carries out the reaction a plastoquinone + NADPH + (n+1) H(+)(in) = a plastoquinol + NADP(+) + n H(+)(out). In terms of biological role, NDH shuttles electrons from NAD(P)H:plastoquinone, via FMN and iron-sulfur (Fe-S) centers, to quinones in the photosynthetic chain and possibly in a chloroplast respiratory chain. The immediate electron acceptor for the enzyme in this species is believed to be plastoquinone. Couples the redox reaction to proton translocation, and thus conserves the redox energy in a proton gradient. The sequence is that of NAD(P)H-quinone oxidoreductase subunit J, chloroplastic from Drimys granadensis.